Here is a 188-residue protein sequence, read N- to C-terminus: Murein DD-endopeptidase MepS/Murein LD-carboxypeptidase (188 aa).

A signal peptide spans 1–26; it reads MVKSQPILRYILRGIPAIAVAVLLSA. Residue Cys-27 is the site of N-palmitoyl cysteine attachment. Cys-27 carries the S-diacylglycerol cysteine lipid modification. Residues 64–185 enclose the NlpC/P60 domain; that stretch reads VDVKSRIMDQ…KRYNEARRVL (122 aa). Cys-94 functions as the Nucleophile in the catalytic mechanism. The Proton acceptor role is filled by His-145. The active site involves His-157.

The protein belongs to the peptidase C40 family. As to quaternary structure, monomer.

It is found in the cell outer membrane. The catalysed reaction is N-acetyl-D-glucosaminyl-N-acetylmuramoyl-L-alanyl-meso-2,6-diaminoheptanedioyl-D-alanine + H2O = N-acetyl-D-glucosaminyl-N-acetylmuramoyl-L-alanyl-meso-2,6-diaminoheptanedioate + D-alanine. It participates in cell wall biogenesis; cell wall polysaccharide biosynthesis. A murein DD-endopeptidase with specificity for D-Ala-meso-diaminopimelic acid (mDAP) cross-links. Its role is probably to cleave D-Ala-mDAP cross-links to allow insertion of new glycans and thus cell wall expansion. Functionally redundant with MepM and MepH. Also has weak LD-carboxypeptidase activity on L-mDAP-D-Ala peptide bonds. This Escherichia coli O157:H7 protein is Murein DD-endopeptidase MepS/Murein LD-carboxypeptidase (mepS).